The chain runs to 361 residues: MKALILVGGFGTRLRPLTLSFPKPLVDFANKPMILHQIEALKAVGVDEVVLAINYQPEVMLNFLKDFETKLEIKITCSQETEPLGTAGPLALARDKLLDGSGEPFFVLNSDVISEYPLKEMLEFHKSHGGEASIMVTKVDEPSKYGVVVMEESTGRVEKFVEKPKLYVGNKINAGIYLLNPSVLDKIELRPTSIEKETFPKIAAAQGLYAMVLPGFWMDIGQPRDYITGLRLYLDSLRKKSPAKLTSGPHIVGNVLVDETATIGEGCLIGPDVAIGPGCIVESGVRLSRCTVMRGVRIKKHACISSSIIGWHSTVGQWARIENMTILGEDVHVSDEIYSNGGVVLPHKEIKSNILKPEIVM.

Positions 6 and 7 each coordinate GDP-alpha-D-mannose. Diphosphate contacts are provided by glycine 9, glycine 11, threonine 12, arginine 13, and lysine 23. Glycine 85, asparagine 109, aspartate 111, glycine 146, and asparagine 173 together coordinate GDP-alpha-D-mannose.

The protein belongs to the transferase hexapeptide repeat family. Interacts in vitro with CSN5A and CSN5B, but in planta only with CSN5B, which targets CYT1 for degradation in the dark by the 26S proteasome. Forms homodimers in the unliganded structure. The product-bound structure is composed of six dimers that form a dodecameric assembly.

It localises to the cytoplasm. The protein resides in the nucleus. The catalysed reaction is alpha-D-mannose 1-phosphate + GTP + H(+) = GDP-alpha-D-mannose + diphosphate. It participates in nucleotide-sugar biosynthesis; GDP-alpha-D-mannose biosynthesis; GDP-alpha-D-mannose from alpha-D-mannose 1-phosphate (GTP route): step 1/1. Essential protein during embryogenesis. Catalyzes a reaction of the Smirnoff-Wheeler pathway, the major route to ascorbate biosynthesis in plants. Plays an essential role in plant growth and development and cell-wall architecture. Provides GDP-mannose, used for cell wall carbohydrate biosynthesis, protein N-glycosylation, as well as for the biosynthesis of the antioxidant ascorbate. This is Mannose-1-phosphate guanylyltransferase 1 from Arabidopsis thaliana (Mouse-ear cress).